Consider the following 145-residue polypeptide: D-aminoacyl-tRNA deacylase (145 aa).

Positions 137-138 match the Gly-cisPro motif, important for rejection of L-amino acids motif; sequence GP.

Belongs to the DTD family. Homodimer.

The protein resides in the cytoplasm. The catalysed reaction is glycyl-tRNA(Ala) + H2O = tRNA(Ala) + glycine + H(+). The enzyme catalyses a D-aminoacyl-tRNA + H2O = a tRNA + a D-alpha-amino acid + H(+). Functionally, an aminoacyl-tRNA editing enzyme that deacylates mischarged D-aminoacyl-tRNAs. Also deacylates mischarged glycyl-tRNA(Ala), protecting cells against glycine mischarging by AlaRS. Acts via tRNA-based rather than protein-based catalysis; rejects L-amino acids rather than detecting D-amino acids in the active site. By recycling D-aminoacyl-tRNA to D-amino acids and free tRNA molecules, this enzyme counteracts the toxicity associated with the formation of D-aminoacyl-tRNA entities in vivo and helps enforce protein L-homochirality. The protein is D-aminoacyl-tRNA deacylase of Shewanella baltica (strain OS155 / ATCC BAA-1091).